The sequence spans 381 residues: tRNA pseudouridine synthase D (381 aa).

The Nucleophile role is filled by Asp-81. The region spanning 160-335 is the TRUD domain; sequence GMPNYFGPQR…TLGSRRFFWV (176 aa).

Belongs to the pseudouridine synthase TruD family.

The enzyme catalyses uridine(13) in tRNA = pseudouridine(13) in tRNA. Responsible for synthesis of pseudouridine from uracil-13 in transfer RNAs. This is tRNA pseudouridine synthase D from Helicobacter pylori (strain Shi470).